Consider the following 261-residue polypeptide: Leucine-rich repeat-containing protein 61 (261 aa).

3 LRR repeats span residues 54–75 (GLEW…ASLR), 76–97 (QLAV…AACE), and 98–119 (NLQC…QCLA). An LRRCT domain is found at 138–183 (NPLCASPCYWASVRELLPGLKVLDGERVSGRGSDFYQLCRDLDSSL).

In Bos taurus (Bovine), this protein is Leucine-rich repeat-containing protein 61 (LRRC61).